The primary structure comprises 90 residues: Putative transcript Y 12 protein (90 aa).

The polypeptide is Putative transcript Y 12 protein (TTTY12) (Homo sapiens (Human)).